Here is a 40-residue protein sequence, read N- to C-terminus: Antimicrobial peptide 1 (40 aa).

The 40-residue stretch at 1–40 (AQCGAQGGGATCPGGLCCSQWGWCGSTPKYCGAGCQSNCK) folds into the Chitin-binding type-1 domain. 4 disulfide bridges follow: Cys3–Cys18, Cys12–Cys24, Cys17–Cys31, and Cys35–Cys39.

In terms of processing, not glycosylated.

Its function is as follows. Antimicrobial peptide active against plant pathogenic fungi and Gram-negative and -positive bacteria. The polypeptide is Antimicrobial peptide 1 (Fagopyrum esculentum (Common buckwheat)).